The sequence spans 182 residues: Protein LURP-one-related 7 (182 aa).

The protein belongs to the LOR family.

Functionally, might be related to the phospholipid scramblase and tubby-like superfamily of membrane tethered transcription factors. This is Protein LURP-one-related 7 from Arabidopsis thaliana (Mouse-ear cress).